Consider the following 145-residue polypeptide: MAQKQTPSGPTQRQQRVAELIRHALAEVLQRGDIQDPVLGSHVVTVPEVRMSPDLKLATAYVMPLGGQDEAPVIAALERHKKILRQEVARRVNLKFAPDLRFRRDETFDEAARIDQLLRSEKVQRDLESAPREDDEGEPASSSRD.

A compositionally biased stretch (basic and acidic residues) spans 122 to 132; sequence KVQRDLESAPR. Residues 122 to 145 are disordered; it reads KVQRDLESAPREDDEGEPASSSRD.

Belongs to the RbfA family. In terms of assembly, monomer. Binds 30S ribosomal subunits, but not 50S ribosomal subunits or 70S ribosomes.

Its subcellular location is the cytoplasm. Its function is as follows. One of several proteins that assist in the late maturation steps of the functional core of the 30S ribosomal subunit. Associates with free 30S ribosomal subunits (but not with 30S subunits that are part of 70S ribosomes or polysomes). Required for efficient processing of 16S rRNA. May interact with the 5'-terminal helix region of 16S rRNA. The sequence is that of Ribosome-binding factor A from Methylorubrum extorquens (strain CM4 / NCIMB 13688) (Methylobacterium extorquens).